The primary structure comprises 317 residues: tRNA dimethylallyltransferase (317 aa).

An ATP-binding site is contributed by 14–21 (GPTAVGKT). Position 16–21 (16–21 (TAVGKT)) interacts with substrate. Residues 39–42 (DSMQ) are interaction with substrate tRNA.

This sequence belongs to the IPP transferase family. In terms of assembly, monomer. Requires Mg(2+) as cofactor.

It catalyses the reaction adenosine(37) in tRNA + dimethylallyl diphosphate = N(6)-dimethylallyladenosine(37) in tRNA + diphosphate. Its function is as follows. Catalyzes the transfer of a dimethylallyl group onto the adenine at position 37 in tRNAs that read codons beginning with uridine, leading to the formation of N6-(dimethylallyl)adenosine (i(6)A). The polypeptide is tRNA dimethylallyltransferase (Bacillus mycoides (strain KBAB4) (Bacillus weihenstephanensis)).